We begin with the raw amino-acid sequence, 696 residues long: MMHIQTLRKITILDVQDKQRCLSTNQNVPDNVFQLIACWCYFPPFLSIAKIKPLIALKAGISENPVLIGCRRIKMAHCPYSEAMTRTTSVEDVKFEIPAWDNSNVDVADGSGRPESSTSGDTIRPKGRIRRSMTACNTCRKLKTRCDLDPRGHACRRCLSLRIECKLPETAERFQDNASMWSDATAAIPSIEERLISLERSMTEMTSMMRRMMDRSPSISGSSVSMLTRSGITDETASIEGSQSSSFAPRPIRLFQDLQSDFTGEANVLPADSRSLGDLFTKGIIDPKLSQKLIQLFVDHFGIWISVDNPSDIHNELRATDPLLYSTACLLASRYVPGIPLSVIHAMYLQIRHATVNVLWNKTPLKHETLQALALLALWPTAVQKETPMDSWLLSGISINHAIISFDFLNHAPSDLIVDNDMVAKLRVWNALCLTQLQSAIGNARPFHIQQRYLEHCPRLLEHPAATFEDGKIVAEIQLYLIALKLQNFSHRMRLGDFEYEEIERWKMEWAHLLKLSLWYCQLLLYRTAMRFHWESEHLISEILRNSRLILSKFLLVRFPNALAFPDQIYYIVGYAALNLCDFSPMDPLIDQVQTFLLHLSPNEDHIAYRFSYTITELKRRCATGPNPHNVVKGAFGDTRKLSMGQQIPFMNPLMDTMMGEYGGLEHLIPEVPPNSLPDMLTSVAGELQAFRTAIL.

Residues 106–126 (DVADGSGRPESSTSGDTIRPK) are disordered. Positions 136–165 (CNTCRKLKTRCDLDPRGHACRRCLSLRIEC) form a DNA-binding region, zn(2)-C6 fungal-type.

It belongs to the prtT family.

It localises to the nucleus. In terms of biological role, transcription factor required for protein utilization and degradation. Regulates transcription of major secreted proteases including a serine alkaline protease (alk1), a metalloprotease (mep), an aspergillopepsin (pep1), a sedolisin (sed2) and two dipeptidyl-peptidases (dppIV and dppV). However, it is not a virulence determinant in leukopenic mice. This is Transcriptional activator of proteases prtT (prtT) from Aspergillus fumigatus (strain ATCC MYA-4609 / CBS 101355 / FGSC A1100 / Af293) (Neosartorya fumigata).